A 279-amino-acid polypeptide reads, in one-letter code: Glutamate racemase (279 aa).

Substrate contacts are provided by residues aspartate 13–serine 14 and tyrosine 45–glycine 46. Catalysis depends on cysteine 76, which acts as the Proton donor/acceptor. Position 77–78 (asparagine 77–threonine 78) interacts with substrate. Cysteine 185 acts as the Proton donor/acceptor in catalysis. Threonine 186 to histidine 187 contributes to the substrate binding site.

Belongs to the aspartate/glutamate racemases family.

The enzyme catalyses L-glutamate = D-glutamate. It functions in the pathway cell wall biogenesis; peptidoglycan biosynthesis. In terms of biological role, provides the (R)-glutamate required for cell wall biosynthesis. The polypeptide is Glutamate racemase (Picosynechococcus sp. (strain ATCC 27264 / PCC 7002 / PR-6) (Agmenellum quadruplicatum)).